The primary structure comprises 251 residues: Aspartate/glutamate leucyltransferase (251 aa).

It belongs to the R-transferase family. Bpt subfamily.

It localises to the cytoplasm. It carries out the reaction N-terminal L-glutamyl-[protein] + L-leucyl-tRNA(Leu) = N-terminal L-leucyl-L-glutamyl-[protein] + tRNA(Leu) + H(+). It catalyses the reaction N-terminal L-aspartyl-[protein] + L-leucyl-tRNA(Leu) = N-terminal L-leucyl-L-aspartyl-[protein] + tRNA(Leu) + H(+). In terms of biological role, functions in the N-end rule pathway of protein degradation where it conjugates Leu from its aminoacyl-tRNA to the N-termini of proteins containing an N-terminal aspartate or glutamate. The sequence is that of Aspartate/glutamate leucyltransferase from Stenotrophomonas maltophilia (strain K279a).